The sequence spans 117 residues: B-enzyme (117 aa).

D89 is a catalytic residue.

The enzyme catalyses Hydrolysis of (1-&gt;4)-beta-linkages between N-acetylmuramic acid and N-acetyl-D-glucosamine residues in a peptidoglycan and between N-acetyl-D-glucosamine residues in chitodextrins.. The protein is B-enzyme (lyzB) of Bacillus subtilis.